The sequence spans 330 residues: Dimethyladenosine transferase 1, mitochondrial (330 aa).

Residues 1–84 (MAQPSARVLQ…RSILRRHPQR (84 aa)) constitute a mitochondrion transit peptide. Residues 38–41 (QNFL), N39, L41, G67, E89, D118, and N140 contribute to the S-adenosyl-L-methionine site.

The protein belongs to the class I-like SAM-binding methyltransferase superfamily. rRNA adenine N(6)-methyltransferase family. KsgA subfamily.

The protein localises to the mitochondrion. In terms of biological role, probable S-adenosyl-L-methionine-dependent methyltransferase which specifically dimethylates mitochondrial 12S rRNA at the conserved stem loop. In contrast to mtTFB2, it does not have a critical role in either transcription or regulation of the copy number of mitochondrial DNA. The protein is Dimethyladenosine transferase 1, mitochondrial (mtTFB1) of Drosophila melanogaster (Fruit fly).